The sequence spans 167 residues: Minor fimbrial protein PrsF (167 aa).

An N-terminal signal peptide occupies residues 1–18 (MIRLSLFISLLLTSVAVL).

It is found in the secreted. The protein localises to the fimbrium. Functionally, fimbriae (also called pili), polar filaments radiating from the surface of the bacterium to a length of 0.5-1.5 micrometers and numbering 100-300 per cell, enable bacteria to colonize the epithelium of specific host organs. This Escherichia coli protein is Minor fimbrial protein PrsF (prsF).